The chain runs to 388 residues: Glutamate 5-kinase (388 aa).

ATP is bound at residue lysine 21. 3 residues coordinate substrate: serine 61, aspartate 148, and asparagine 160. ATP contacts are provided by residues 180–181 (TD) and 222–228 (TGGMITK). The PUA domain occupies 285–363 (RGSVFLDPGA…RWLARELGAE (79 aa)).

Belongs to the glutamate 5-kinase family.

The protein resides in the cytoplasm. The enzyme catalyses L-glutamate + ATP = L-glutamyl 5-phosphate + ADP. Its pathway is amino-acid biosynthesis; L-proline biosynthesis; L-glutamate 5-semialdehyde from L-glutamate: step 1/2. Catalyzes the transfer of a phosphate group to glutamate to form L-glutamate 5-phosphate. This Thermobifida fusca (strain YX) protein is Glutamate 5-kinase.